The sequence spans 375 residues: tRNA-specific 2-thiouridylase MnmA (375 aa).

ATP contacts are provided by residues 8–15 (GLSGGVDS) and M34. The tract at residues 104–106 (NPD) is interaction with target base in tRNA. C109 serves as the catalytic Nucleophile. C109 and C208 are disulfide-bonded. ATP is bound at residue G134. Positions 158-160 (KDQ) are interaction with tRNA. The Cysteine persulfide intermediate role is filled by C208. The interaction with tRNA stretch occupies residues 321–322 (RY).

It belongs to the MnmA/TRMU family.

The protein localises to the cytoplasm. It carries out the reaction S-sulfanyl-L-cysteinyl-[protein] + uridine(34) in tRNA + AH2 + ATP = 2-thiouridine(34) in tRNA + L-cysteinyl-[protein] + A + AMP + diphosphate + H(+). Catalyzes the 2-thiolation of uridine at the wobble position (U34) of tRNA, leading to the formation of s(2)U34. The polypeptide is tRNA-specific 2-thiouridylase MnmA (Mycoplasma capricolum subsp. capricolum (strain California kid / ATCC 27343 / NCTC 10154)).